The chain runs to 208 residues: Endoplasmic reticulum vesicle protein 25 (208 aa).

The signal sequence occupies residues 1-15 (MKFLLLLLLAPFISA). Residues 16-177 (LRFDLKAESK…TNESTNERVR (162 aa)) are Lumenal-facing. A GOLD domain is found at 28–118 (QMCIRDFVSE…KRAIELDIES (91 aa)). The chain crosses the membrane as a helical span at residues 178–198 (NFSVLVIIVLTSLGAWQVNYL). The Cytoplasmic segment spans residues 199-208 (KNYFKSKHII).

Belongs to the EMP24/GP25L family.

It localises to the endoplasmic reticulum membrane. It is found in the golgi apparatus membrane. Functionally, constituent of COPII-coated endoplasmic reticulum-derived transport vesicles. Required for efficient transport of a subset of secretory proteins to the Golgi. Facilitates retrograde transport from the Golgi to the endoplasmic reticulum. This Candida glabrata (strain ATCC 2001 / BCRC 20586 / JCM 3761 / NBRC 0622 / NRRL Y-65 / CBS 138) (Yeast) protein is Endoplasmic reticulum vesicle protein 25 (ERV25).